Reading from the N-terminus, the 240-residue chain is tRNA (guanine-N(1)-)-methyltransferase (240 aa).

S-adenosyl-L-methionine contacts are provided by residues Gly-111 and 130–135; that span reads IGDYVI.

This sequence belongs to the RNA methyltransferase TrmD family. Homodimer.

The protein localises to the cytoplasm. It catalyses the reaction guanosine(37) in tRNA + S-adenosyl-L-methionine = N(1)-methylguanosine(37) in tRNA + S-adenosyl-L-homocysteine + H(+). Its function is as follows. Specifically methylates guanosine-37 in various tRNAs. The protein is tRNA (guanine-N(1)-)-methyltransferase of Mycoplasma mycoides subsp. mycoides SC (strain CCUG 32753 / NCTC 10114 / PG1).